A 288-amino-acid polypeptide reads, in one-letter code: MSGVGAITLDGKATRDEIFVDLKERVAALTEQGRTPGLGTVLVGDDPGSQAYVRGKHSDCAKVGINSIRRDLPADISQAELDATIDELNANPECTGYIVQLPLPKHLDENAALERIDPGKDADGLHPTNLGRLVLNEPAPLPCTPRGIVHLLRRYEVEIAGAHVVVIGRGVTVGRPLGLLLTRRSENATVTLCHTATRHLPQFTREADIIVAAAGVPHMVTAEMVRPGAAVIDVGVSRDDNGKLVGDVAPDVWEVAGHVSPNPGGVGPLTRAFLLTNVVERAEALARG.

Residues 168–170 (GRG), Thr195, and Val236 contribute to the NADP(+) site.

Belongs to the tetrahydrofolate dehydrogenase/cyclohydrolase family. In terms of assembly, homodimer.

It carries out the reaction (6R)-5,10-methylene-5,6,7,8-tetrahydrofolate + NADP(+) = (6R)-5,10-methenyltetrahydrofolate + NADPH. The catalysed reaction is (6R)-5,10-methenyltetrahydrofolate + H2O = (6R)-10-formyltetrahydrofolate + H(+). It participates in one-carbon metabolism; tetrahydrofolate interconversion. Its function is as follows. Catalyzes the oxidation of 5,10-methylenetetrahydrofolate to 5,10-methenyltetrahydrofolate and then the hydrolysis of 5,10-methenyltetrahydrofolate to 10-formyltetrahydrofolate. The protein is Bifunctional protein FolD of Mycobacterium sp. (strain JLS).